A 188-amino-acid polypeptide reads, in one-letter code: Elongation factor P (188 aa).

K34 carries the N6-(3,6-diaminohexanoyl)-5-hydroxylysine modification.

The protein belongs to the elongation factor P family. Post-translationally, may be beta-lysylated on the epsilon-amino group of Lys-34 by the combined action of EpmA and EpmB, and then hydroxylated on the C5 position of the same residue by EpmC (if this protein is present). Lysylation is critical for the stimulatory effect of EF-P on peptide-bond formation. The lysylation moiety may extend toward the peptidyltransferase center and stabilize the terminal 3-CCA end of the tRNA. Hydroxylation of the C5 position on Lys-34 may allow additional potential stabilizing hydrogen-bond interactions with the P-tRNA.

Its subcellular location is the cytoplasm. The protein operates within protein biosynthesis; polypeptide chain elongation. In terms of biological role, involved in peptide bond synthesis. Alleviates ribosome stalling that occurs when 3 or more consecutive Pro residues or the sequence PPG is present in a protein, possibly by augmenting the peptidyl transferase activity of the ribosome. Modification of Lys-34 is required for alleviation. This chain is Elongation factor P, found in Erwinia tasmaniensis (strain DSM 17950 / CFBP 7177 / CIP 109463 / NCPPB 4357 / Et1/99).